The following is a 595-amino-acid chain: Chaperone protein HscA homolog (595 aa).

The protein belongs to the heat shock protein 70 family.

Its function is as follows. Chaperone involved in the maturation of iron-sulfur cluster-containing proteins. Has a low intrinsic ATPase activity which is markedly stimulated by HscB. The chain is Chaperone protein HscA homolog from Rickettsia rickettsii (strain Iowa).